The primary structure comprises 392 residues: Formate-dependent phosphoribosylglycinamide formyltransferase (392 aa).

Residues 22–23 and Glu82 each bind N(1)-(5-phospho-beta-D-ribosyl)glycinamide; that span reads EL. ATP-binding positions include Arg114, Lys155, 160–165, 195–198, and Glu203; these read SSGKGQ and EGVV. Positions 119–308 constitute an ATP-grasp domain; sequence RLAAEELQLP…EFALHVRAFL (190 aa). Residues Glu267 and Glu279 each contribute to the Mg(2+) site. Residues Asp286, Lys355, and 362-363 contribute to the N(1)-(5-phospho-beta-D-ribosyl)glycinamide site; that span reads RR.

This sequence belongs to the PurK/PurT family. In terms of assembly, homodimer.

The enzyme catalyses N(1)-(5-phospho-beta-D-ribosyl)glycinamide + formate + ATP = N(2)-formyl-N(1)-(5-phospho-beta-D-ribosyl)glycinamide + ADP + phosphate + H(+). It participates in purine metabolism; IMP biosynthesis via de novo pathway; N(2)-formyl-N(1)-(5-phospho-D-ribosyl)glycinamide from N(1)-(5-phospho-D-ribosyl)glycinamide (formate route): step 1/1. In terms of biological role, involved in the de novo purine biosynthesis. Catalyzes the transfer of formate to 5-phospho-ribosyl-glycinamide (GAR), producing 5-phospho-ribosyl-N-formylglycinamide (FGAR). Formate is provided by PurU via hydrolysis of 10-formyl-tetrahydrofolate. This Escherichia coli O1:K1 / APEC protein is Formate-dependent phosphoribosylglycinamide formyltransferase.